A 759-amino-acid chain; its full sequence is MGVLRLRVDGQTFRDPDNREITLRGINVAGEAKYPKKPDIPSYVSDGFFDADNVSFVGRPFSLDDAHTHFSRLRKWGYNTIRYVFTWEAIEHEGPGKYDDEWISFTIEVLRIAKQYGFYVFLDPHQDVWSRLSGGSGAPAWTLYAAGFDPRGFKKTEAALVQNTFDDPAEFPKMIWSTNYTRLVSQTMFTLFYGGRDFAPKAIIDGINIQDYLQGHFIAACRYFAQKIHEAGDIENEVVIGWESMNEPNRGLIGVQDISVIPPEQQLQLGTSPTAFQGMLTGSGRACEESTWAFGGFGPYQTGRELVDPEGETAWLPADYDDTRYGWVRDPGWKLGECLWAQHGVWDPSSDKLLRKDYFAKNPQTGEPLNYDKFTNTYFMEHYRAYRDALRSVWPEAIIFCQPPVMEVPPDLKGTVDDDPNMVHAVHYYDGITLLTKHWNRLYNVDVIGVLRGKYLTPAFAVKIGETAIRNCLRDQLKFLRDESLRYMGTHPLIFTEIGIPFDMDDRHAYKTGDYSGQVSAMDANHFAIEGSTANGFTLWLYTTSNNHEWGDNWNGEDLSIYSVDDLELPSGKLLAFENESQRDPQSPAYSESQRNTESYRVGPRDLKQALQAPSISSEISQSSQDKLGFRAAEAWVRPSPIITNGQILQYGFDLKSCVFSMRLLGEKKGLGQEAATEIFLPDFHFPDTHTVVAVSAGEWTIDYPEIHSVKFQRLRWWHPEGDHNIKIQGVKRKPGDPTVSGEELSYLEQCQGGGCSVM.

Glutamate 247 (proton donor) is an active-site residue. The Nucleophile role is filled by glutamate 497. Residues 576-600 form a disordered region; it reads AFENESQRDPQSPAYSESQRNTESY. Over residues 584–599 the composition is skewed to polar residues; it reads DPQSPAYSESQRNTES.

This sequence belongs to the glycosyl hydrolase 5 (cellulase A) family.

Its subcellular location is the membrane. The enzyme catalyses a beta-D-glucosyl-(1&lt;-&gt;1')-N-acylsphing-4-enine + H2O = an N-acylsphing-4-enine + D-glucose. Its function is as follows. Specifically hydrolyzes the glucosidic linkage in glucosylceramide. May prevent accumulation of aberrent glucosylceramide containing immature ceramide. The protein is Glucosylceramidase of Aspergillus fumigatus (Neosartorya fumigata).